We begin with the raw amino-acid sequence, 1044 residues long: DEMETER-like protein 3 (1044 aa).

A compositionally biased stretch (polar residues) spans 1 to 15 (MLTDGSQHTYQNGET). Positions 1–107 (MLTDGSQHTY…KPRNPATTRL (107 aa)) are disordered. Residues 16-30 (KNSKEHERKCDESAH) show a composition bias toward basic and acidic residues. A compositionally biased stretch (basic residues) spans 38 to 53 (THKKKEKKNSKEKHGI). A compositionally biased stretch (basic and acidic residues) spans 54–66 (KHSESEHLQDDIS). Residues 71–89 (GKGRRRNSKGTPKKLRFNR) are compositionally biased toward basic residues. The DEMETER stretch occupies residues 348-445 (KVNLDPETIK…AFMSVAAKFP (98 aa)). Residues C678, C685, C688, and C694 each contribute to the [4Fe-4S] cluster site. The tract at residues 1024–1044 (VRRLHTPPDERGPKFMSDDDI) is disordered.

Belongs to the DNA glycosylase family. DEMETER subfamily. It depends on [4Fe-4S] cluster as a cofactor.

The protein localises to the nucleus. In terms of biological role, potential transcriptional activator that may act by nicking the target promoter. Catalyzes the release of 5-methylcytosine (5-meC) from DNA by a glycosylase/lyase mechanism. This Arabidopsis thaliana (Mouse-ear cress) protein is DEMETER-like protein 3 (DML3).